The chain runs to 120 residues: Large ribosomal subunit protein uL14 (120 aa).

This sequence belongs to the universal ribosomal protein uL14 family. As to quaternary structure, part of the 50S ribosomal subunit. Forms a cluster with proteins L3 and L19. In the 70S ribosome, L14 and L19 interact and together make contacts with the 16S rRNA in bridges B5 and B8.

In terms of biological role, binds to 23S rRNA. Forms part of two intersubunit bridges in the 70S ribosome. The polypeptide is Large ribosomal subunit protein uL14 (Karelsulcia muelleri (strain GWSS) (Sulcia muelleri)).